A 72-amino-acid polypeptide reads, in one-letter code: Translation initiation factor IF-1 (72 aa).

An S1-like domain is found at 1-72; it reads MSKEDSFEME…SKGRITYRAR (72 aa).

It belongs to the IF-1 family. Component of the 30S ribosomal translation pre-initiation complex which assembles on the 30S ribosome in the order IF-2 and IF-3, IF-1 and N-formylmethionyl-tRNA(fMet); mRNA recruitment can occur at any time during PIC assembly.

The protein resides in the cytoplasm. One of the essential components for the initiation of protein synthesis. Stabilizes the binding of IF-2 and IF-3 on the 30S subunit to which N-formylmethionyl-tRNA(fMet) subsequently binds. Helps modulate mRNA selection, yielding the 30S pre-initiation complex (PIC). Upon addition of the 50S ribosomal subunit IF-1, IF-2 and IF-3 are released leaving the mature 70S translation initiation complex. This is Translation initiation factor IF-1 from Pseudomonas syringae pv. tomato (strain ATCC BAA-871 / DC3000).